The following is a 138-amino-acid chain: Large ribosomal subunit protein bL19 (138 aa).

The protein belongs to the bacterial ribosomal protein bL19 family.

This protein is located at the 30S-50S ribosomal subunit interface and may play a role in the structure and function of the aminoacyl-tRNA binding site. This Rickettsia rickettsii (strain Iowa) protein is Large ribosomal subunit protein bL19.